We begin with the raw amino-acid sequence, 248 residues long: uncharacterized protein (248 aa).

A helical transmembrane segment spans residues 7-25 (TIFIGGIYGLGVYIGAVAW).

Belongs to the methyltransferase superfamily. METL family.

Its subcellular location is the mitochondrion inner membrane. Probable methyltransferase. This is an uncharacterized protein from Schizosaccharomyces pombe (strain 972 / ATCC 24843) (Fission yeast).